A 148-amino-acid chain; its full sequence is Large ribosomal subunit protein cL37 (148 aa).

The N-terminal 65 residues, 1-65 (MALLCFNSLP…SSHGRIVVKA (65 aa)), are a transit peptide targeting the chloroplast. A66 is modified (N-acetylalanine). Residues 125–148 (LVRKRKMRKKGRWPPSKMKKNKNV) are disordered.

The protein belongs to the chloroplast-specific ribosomal protein cL37 family. As to quaternary structure, part of the 50S ribosomal subunit.

The protein localises to the plastid. The protein resides in the chloroplast. The polypeptide is Large ribosomal subunit protein cL37 (PSRP5) (Arabidopsis thaliana (Mouse-ear cress)).